Reading from the N-terminus, the 196-residue chain is T-cell surface glycoprotein CD3 epsilon chain (196 aa).

Residues 1–21 (MPSGNLWKVLGLCLLSVGAWG) form the signal peptide. Residues 22–116 (QEDIERPDED…VCENCVEVDL (95 aa)) lie on the Extracellular side of the membrane. The Ig-like domain occupies 28 to 102 (PDEDTQKTFK…VGEKTSHRLY (75 aa)). A disulfide bridge connects residues Cys49 and Cys91. A helical membrane pass occupies residues 117–137 (MAVVTIIVVDICITLGLLMVV). Over 138-196 (YYYSKSRKAKAMPVTRGAGAGGRPRGQNRERPPPVPNPDYEPIRKGQRDLYSGLNQRGR) the chain is Cytoplasmic. The tract at residues 150–196 (PVTRGAGAGGRPRGQNRERPPPVPNPDYEPIRKGQRDLYSGLNQRGR) is disordered. The interval 164–181 (QNRERPPPVPNPDYEPIR) is NUMB-binding region. An ITAM domain is found at 167-194 (ERPPPVPNPDYEPIRKGQRDLYSGLNQR). The segment at 168–175 (RPPPVPNP) is proline-rich sequence. Tyr177 and Tyr188 each carry phosphotyrosine.

In terms of assembly, the TCR-CD3 complex is composed of a CD3D/CD3E and a CD3G/CD3E heterodimers that preferentially associate with TCRalpha and TCRbeta, respectively, to form TCRalpha/CD3E/CD3G and TCRbeta/CD3G/CD3E trimers. In turn, the hexamer interacts with CD3Z homodimer to form the TCR-CD3 complex. Alternatively, TCRalpha and TCRbeta can be replaced by TCRgamma and TCRdelta. Interacts with CD6. Interacts (via Proline-rich sequence) with NCK1; the interaction is ligand dependent but independent of tyrosine kinase activation. Phosphorylated on Tyr residues after T-cell receptor triggering by LCK in association with CD4/CD8.

It is found in the cell membrane. Its function is as follows. Part of the TCR-CD3 complex present on T-lymphocyte cell surface that plays an essential role in adaptive immune response. When antigen presenting cells (APCs) activate T-cell receptor (TCR), TCR-mediated signals are transmitted across the cell membrane by the CD3 chains CD3D, CD3E, CD3G and CD3Z. All CD3 chains contain immunoreceptor tyrosine-based activation motifs (ITAMs) in their cytoplasmic domain. Upon TCR engagement, these motifs become phosphorylated by Src family protein tyrosine kinases LCK and FYN, resulting in the activation of downstream signaling pathways. In addition of this role of signal transduction in T-cell activation, CD3E plays an essential role in correct T-cell development. Also participates in internalization and cell surface down-regulation of TCR-CD3 complexes via endocytosis sequences present in CD3E cytosolic region. In addition to its role as a TCR coreceptor, it serves as a receptor for ITPRIPL1. Ligand recognition inhibits T-cell activation by promoting interaction with NCK1, which prevents CD3E-ZAP70 interaction and blocks the ERK-NFkB signaling cascade and calcium influx. The protein is T-cell surface glycoprotein CD3 epsilon chain (CD3E) of Sus scrofa (Pig).